A 260-amino-acid chain; its full sequence is uncharacterized protein (260 aa).

Residues 1-38 are a coiled coil; it reads MNWTREIEQYKQVVASYKLKMKRMEMKISDISEEKRQS.

This is an uncharacterized protein from Caenorhabditis elegans.